Reading from the N-terminus, the 496-residue chain is MMTMPLSKLFAHASRDPLIRELTLDSRSVRPGDLFLAVPGAKVDGREHIADALARGAAAVAYEEQGANVLPLTDVPLIPVKGLIAQLSDIAGRFYGEPSRQLNLVGVTGTNGKTSVTQLVAQALDLLGQRCGLIGTLGTGFYGELQSGRLTTPDPIAVQSTLNDLKKGGARAVAMEVSSHALEQGRVAALEFDIAVMTNLSRDHLDYHGSMEAYEAAKAKLFAWPSLRCQVVNLDDDFGRRLAADFARRPSVDHIETRLLSYSLESPEASLFCREAVFSDDGVRATLVTAQGERILRSQLLGRFNLSNMLAAVATLLALDYALDEILKVTPQLQGPVGRMQRLGGGDKPLVVVDYAHTPDALEKVLEALRPHAHGKLLCLFGCGGDRDRGKRPLMAEVAERLADRVLVTDDNPRTEDPSRIFDDIRPGFTRPDDVEFVAGRGEAIAHLIATAAANDVIVLAGKGHEDYQEINGERHDFSDLTEAEKALAAWEAPHA.

The UDP-N-acetyl-alpha-D-muramoyl-L-alanyl-D-glutamate site is built by L24 and S26. 109–115 contacts ATP; the sequence is GTNGKTS. Residues 151–152, S178, Q184, and R186 each bind UDP-N-acetyl-alpha-D-muramoyl-L-alanyl-D-glutamate; that span reads TT. An N6-carboxylysine modification is found at K218. Residues R387, 411-414, G462, and E466 contribute to the meso-2,6-diaminopimelate site; that span reads DNPR. The short motif at 411–414 is the Meso-diaminopimelate recognition motif element; it reads DNPR.

This sequence belongs to the MurCDEF family. MurE subfamily. The cofactor is Mg(2+). In terms of processing, carboxylation is probably crucial for Mg(2+) binding and, consequently, for the gamma-phosphate positioning of ATP.

The protein localises to the cytoplasm. It carries out the reaction UDP-N-acetyl-alpha-D-muramoyl-L-alanyl-D-glutamate + meso-2,6-diaminopimelate + ATP = UDP-N-acetyl-alpha-D-muramoyl-L-alanyl-gamma-D-glutamyl-meso-2,6-diaminopimelate + ADP + phosphate + H(+). It participates in cell wall biogenesis; peptidoglycan biosynthesis. Functionally, catalyzes the addition of meso-diaminopimelic acid to the nucleotide precursor UDP-N-acetylmuramoyl-L-alanyl-D-glutamate (UMAG) in the biosynthesis of bacterial cell-wall peptidoglycan. This is UDP-N-acetylmuramoyl-L-alanyl-D-glutamate--2,6-diaminopimelate ligase from Pseudomonas putida (strain ATCC 47054 / DSM 6125 / CFBP 8728 / NCIMB 11950 / KT2440).